The following is a 68-amino-acid chain: DNA-directed RNA polymerase subunit omega (68 aa).

This sequence belongs to the RNA polymerase subunit omega family. The RNAP catalytic core consists of 2 alpha, 1 beta, 1 beta' and 1 omega subunit. When a sigma factor is associated with the core the holoenzyme is formed, which can initiate transcription.

It catalyses the reaction RNA(n) + a ribonucleoside 5'-triphosphate = RNA(n+1) + diphosphate. Functionally, promotes RNA polymerase assembly. Latches the N- and C-terminal regions of the beta' subunit thereby facilitating its interaction with the beta and alpha subunits. The polypeptide is DNA-directed RNA polymerase subunit omega (Persephonella marina (strain DSM 14350 / EX-H1)).